The following is a 359-amino-acid chain: 4-hydroxy-3-methylbut-2-en-1-yl diphosphate synthase (flavodoxin) (359 aa).

[4Fe-4S] cluster is bound by residues Cys264, Cys267, Cys299, and Glu306.

It belongs to the IspG family. Requires [4Fe-4S] cluster as cofactor.

The enzyme catalyses (2E)-4-hydroxy-3-methylbut-2-enyl diphosphate + oxidized [flavodoxin] + H2O + 2 H(+) = 2-C-methyl-D-erythritol 2,4-cyclic diphosphate + reduced [flavodoxin]. It functions in the pathway isoprenoid biosynthesis; isopentenyl diphosphate biosynthesis via DXP pathway; isopentenyl diphosphate from 1-deoxy-D-xylulose 5-phosphate: step 5/6. In terms of biological role, converts 2C-methyl-D-erythritol 2,4-cyclodiphosphate (ME-2,4cPP) into 1-hydroxy-2-methyl-2-(E)-butenyl 4-diphosphate. This chain is 4-hydroxy-3-methylbut-2-en-1-yl diphosphate synthase (flavodoxin), found in Helicobacter pylori (strain G27).